Consider the following 422-residue polypeptide: 4-hydroxy-3-methylbut-2-en-1-yl diphosphate synthase (flavodoxin) (422 aa).

[4Fe-4S] cluster-binding residues include cysteine 316, cysteine 319, cysteine 362, and glutamate 369.

This sequence belongs to the IspG family. The cofactor is [4Fe-4S] cluster.

It catalyses the reaction (2E)-4-hydroxy-3-methylbut-2-enyl diphosphate + oxidized [flavodoxin] + H2O + 2 H(+) = 2-C-methyl-D-erythritol 2,4-cyclic diphosphate + reduced [flavodoxin]. The protein operates within isoprenoid biosynthesis; isopentenyl diphosphate biosynthesis via DXP pathway; isopentenyl diphosphate from 1-deoxy-D-xylulose 5-phosphate: step 5/6. Its function is as follows. Converts 2C-methyl-D-erythritol 2,4-cyclodiphosphate (ME-2,4cPP) into 1-hydroxy-2-methyl-2-(E)-butenyl 4-diphosphate. This chain is 4-hydroxy-3-methylbut-2-en-1-yl diphosphate synthase (flavodoxin), found in Ehrlichia ruminantium (strain Gardel).